Here is a 361-residue protein sequence, read N- to C-terminus: Biotin synthase (361 aa).

The region spanning 63–290 is the Radical SAM core domain; it reads NTVQLSTLLS…RAMVRLSAGR (228 aa). [4Fe-4S] cluster-binding residues include cysteine 78, cysteine 82, and cysteine 85. The [2Fe-2S] cluster site is built by cysteine 122, cysteine 153, cysteine 213, and arginine 285.

This sequence belongs to the radical SAM superfamily. Biotin synthase family. Homodimer. [4Fe-4S] cluster serves as cofactor. It depends on [2Fe-2S] cluster as a cofactor.

The catalysed reaction is (4R,5S)-dethiobiotin + (sulfur carrier)-SH + 2 reduced [2Fe-2S]-[ferredoxin] + 2 S-adenosyl-L-methionine = (sulfur carrier)-H + biotin + 2 5'-deoxyadenosine + 2 L-methionine + 2 oxidized [2Fe-2S]-[ferredoxin]. It functions in the pathway cofactor biosynthesis; biotin biosynthesis; biotin from 7,8-diaminononanoate: step 2/2. In terms of biological role, catalyzes the conversion of dethiobiotin (DTB) to biotin by the insertion of a sulfur atom into dethiobiotin via a radical-based mechanism. In Paraburkholderia phytofirmans (strain DSM 17436 / LMG 22146 / PsJN) (Burkholderia phytofirmans), this protein is Biotin synthase.